Reading from the N-terminus, the 229-residue chain is Glutathione S-transferase 1 (229 aa).

The GST N-terminal domain maps to 2–86 (AQFTLWSHAH…YLADKYDTER (85 aa)). One can recognise a GST C-terminal domain in the interval 93–229 (DHPEYYKVIQ…FEERSKALDN (137 aa)).

It belongs to the GST superfamily.

It catalyses the reaction RX + glutathione = an S-substituted glutathione + a halide anion + H(+). Its function is as follows. Involved in the oxidative stress response and detoxification. This Schizosaccharomyces pombe (strain 972 / ATCC 24843) (Fission yeast) protein is Glutathione S-transferase 1 (gst1).